Reading from the N-terminus, the 247-residue chain is Sensory rhodopsin-1 (247 aa).

At 1–4 (MTGA) the chain is on the extracellular side. A helical transmembrane segment spans residues 5–26 (VSAAYWIAAVAFLVGLGITAAL). At 27-35 (YAKLGESED) the chain is on the cytoplasmic side. Residues 36 to 57 (RGRLAALAVIPGFAGLAYAGMA) form a helical membrane-spanning segment. The Extracellular portion of the chain corresponds to 58–71 (LGIGTVTVNGAELV). Residues 72–93 (GLRYVDWIVTTPLLVGFIGYVA) traverse the membrane as a helical segment. At 94–96 (GAS) the chain is on the cytoplasmic side. The chain crosses the membrane as a helical span at residues 97 to 119 (RRAIAGVMLADALMIAFGAGAVV). The Extracellular portion of the chain corresponds to 120 to 123 (TGGT). A helical transmembrane segment spans residues 124 to 151 (LKWVLFGVSSIFHVTLFAYLYVVFPRAV). The Cytoplasmic segment spans residues 152–154 (PDD). A helical membrane pass occupies residues 155–182 (PMQRGLFSLLKNHVGLLWLAYPFVWLMG). Topologically, residues 183-190 (PAGIGFTT) are extracellular. The chain crosses the membrane as a helical span at residues 191–223 (GVGAALTYAFLDVLAKVPYVYFFYARRQAFTDV). Lysine 206 bears the N6-(retinylidene)lysine mark. Topologically, residues 224-247 (VSAATADREDATDAVGDGAPTAAD) are cytoplasmic.

This sequence belongs to the archaeal/bacterial/fungal opsin family. In terms of assembly, interacts with HTR-I.

The protein localises to the cell membrane. In terms of biological role, involved in the control of phototaxis. Mediates both photoattractant (in the orange light) and photophobic (in the near UV light) responses. The signal is then transmitted to the sensory rhodopsin I transducer (HTR-I). In Halobacterium sp. (strain SG1), this protein is Sensory rhodopsin-1 (sop1).